Reading from the N-terminus, the 501-residue chain is Lysine--tRNA ligase (501 aa).

The Mg(2+) site is built by Glu-411 and Glu-418.

This sequence belongs to the class-II aminoacyl-tRNA synthetase family. Homodimer. It depends on Mg(2+) as a cofactor.

The protein localises to the cytoplasm. The catalysed reaction is tRNA(Lys) + L-lysine + ATP = L-lysyl-tRNA(Lys) + AMP + diphosphate. In Clostridium perfringens (strain SM101 / Type A), this protein is Lysine--tRNA ligase.